Consider the following 1350-residue polypeptide: Nidogen (1350 aa).

The first 22 residues, 1-22, serve as a signal peptide directing secretion; that stretch reads MPTFGSKLLACLLLSSVILVSG. Residues 107-260 form the NIDO domain; the sequence is AFYSNVDTSF…GVWLFEVAPI (154 aa). The N-linked (GlcNAc...) asparagine glycan is linked to Asn-231. An EGF-like 1 domain is found at 281-321; the sequence is LALSCQAHAHQCHEKAECHDKAEGYCCVCGSGFYGNGKSCL. 3 disulfides stabilise this stretch: Cys-285–Cys-298, Cys-292–Cys-307, and Cys-309–Cys-320. Residues 325–550 enclose the Nidogen G2 beta-barrel domain; that stretch reads QPIRVTGTLT…GVTPESNACN (226 aa). Asn-423 and Asn-480 each carry an N-linked (GlcNAc...) asparagine glycan. The EGF-like 2 domain maps to 545–583; it reads ESNACNDGTADCVENSVCVPYEDTYRCDCYHGFAAQLDE. Cystine bridges form between Cys-549/Cys-562, Cys-556/Cys-571, Cys-595/Cys-608, Cys-602/Cys-617, and Cys-619/Cys-630. In terms of domain architecture, EGF-like 3; calcium-binding spans 591-631; that stretch reads DIDECATGSHVCDENAVCDNTEGGFNCYCTEGFEGNGYRCL. The N-linked (GlcNAc...) asparagine glycan is linked to Asn-633. The tract at residues 645-691 is disordered; that stretch reads VEGQAEPTSEPSPNPSPYPDQGQDQEREREDDQYPQPNPYPYPEEQI. EGF-like domains follow at residues 788–829, 832–874, 912–953, 955–996, and 997–1037; these read DLIP…YNCD, SDDS…FNCQ, PAGR…TGCT, KPLS…YVCI, and EEQN…SLCQ. Disulfide bonds link Cys-792–Cys-804, Cys-798–Cys-815, Cys-817–Cys-828, Cys-836–Cys-849, Cys-843–Cys-860, Cys-862–Cys-873, Cys-916–Cys-927, Cys-921–Cys-938, Cys-940–Cys-952, Cys-959–Cys-971, Cys-965–Cys-982, Cys-984–Cys-995, Cys-1001–Cys-1014, Cys-1008–Cys-1023, and Cys-1025–Cys-1036. Asn-801 carries N-linked (GlcNAc...) asparagine glycosylation. Asn-1032 carries an N-linked (GlcNAc...) asparagine glycan. 4 LDL-receptor class B repeats span residues 1084–1126, 1127–1170, 1171–1216, and 1257–1282; these read GRVY…DVIS, RRLY…DPYR, EKLF…LENS, and DQFYWTDWTTKKVEIVDSLGARQTPI.

As to expression, expressed in the basement membrane around the follicular epithelium of the adult ovary (at protein level).

It is found in the secreted. It localises to the extracellular space. The protein resides in the extracellular matrix. Its subcellular location is the basement membrane. In terms of biological role, cell adhesion glycoprotein which is widely distributed in basement membranes. Involved in cell-extracellular matrix (ECM) interactions probably by connecting the laminin and collagen IV networks. Required for permeability and mechanical stability of basement membranes, and ECM dependent neural plasticity. Not involved in assembly of the embryonic basement membrane. The polypeptide is Nidogen (Drosophila melanogaster (Fruit fly)).